The primary structure comprises 384 residues: Probable inactive linolenate hydroperoxide lyase (384 aa).

C346 contacts heme.

This sequence belongs to the cytochrome P450 family. It depends on heme as a cofactor. In terms of tissue distribution, expressed in roots, leaves, flowers and siliques.

This Arabidopsis thaliana (Mouse-ear cress) protein is Probable inactive linolenate hydroperoxide lyase.